The primary structure comprises 123 residues: Thioredoxin domain-containing protein 17 (123 aa).

At alanine 2 the chain carries N-acetylalanine. Positions 41-123 (SWCPDCVEAE…SLVEMIFSED (83 aa)) constitute a Thioredoxin domain. Active-site nucleophile residues include cysteine 43 and cysteine 46. Cysteine 43 and cysteine 46 form a disulfide bridge.

It belongs to the thioredoxin family. In terms of assembly, interacts with TRXR1 and DYNLL1/DNCL1. Post-translationally, the oxidized protein is reduced by TRXR1.

It is found in the cytoplasm. Its function is as follows. Disulfide reductase. May participate in various redox reactions through the reversible oxidation of its active center dithiol to a disulfide and catalyze dithiol-disulfide exchange reactions. Modulates TNF-alpha signaling and NF-kappa-B activation. Has peroxidase activity and may contribute to the elimination of cellular hydrogen peroxide. The sequence is that of Thioredoxin domain-containing protein 17 (Txndc17) from Mus musculus (Mouse).